A 422-amino-acid polypeptide reads, in one-letter code: Enolase (422 aa).

Q163 serves as a coordination point for (2R)-2-phosphoglycerate. E205 (proton donor) is an active-site residue. The Mg(2+) site is built by D242, E283, and D310. Residues K335, R364, S365, and K386 each coordinate (2R)-2-phosphoglycerate. Residue K335 is the Proton acceptor of the active site.

The protein belongs to the enolase family. It depends on Mg(2+) as a cofactor.

Its subcellular location is the cytoplasm. It localises to the secreted. The protein resides in the cell surface. The catalysed reaction is (2R)-2-phosphoglycerate = phosphoenolpyruvate + H2O. It participates in carbohydrate degradation; glycolysis; pyruvate from D-glyceraldehyde 3-phosphate: step 4/5. Its function is as follows. Catalyzes the reversible conversion of 2-phosphoglycerate (2-PG) into phosphoenolpyruvate (PEP). It is essential for the degradation of carbohydrates via glycolysis. This is Enolase from Bdellovibrio bacteriovorus (strain ATCC 15356 / DSM 50701 / NCIMB 9529 / HD100).